Reading from the N-terminus, the 304-residue chain is Heme A synthase (304 aa).

Over 1–8 (MFNKRNLK) the chain is Cytoplasmic. Residues 9-29 (WLSVLATIIMAFVQLGGALVT) form a helical membrane-spanning segment. Topologically, residues 30 to 67 (KTGSEDGCGSSWPLCHGALLPQNLPIDTIIELSHRAVS) are extracellular. Residues Cys-37 and Cys-44 are joined by a disulfide bond. Residue Glu-60 is part of the active site. Position 63 (His-63) interacts with heme o. The helical transmembrane segment at 68–88 (GLSLIVVLWLAITAWKHIGYI) threads the bilayer. Residues 89–93 (REVKP) are Cytoplasmic-facing. The chain crosses the membrane as a helical span at residues 94–114 (LAIISIAFLLVQALIGAAAVI). Topologically, residues 115–123 (WQQNSYVLA) are extracellular. Residues 124–144 (LHFGISLISFSSVFVLMLIIF) form a helical membrane-spanning segment. Residue His-125 participates in heme o binding. Topologically, residues 145 to 163 (EVDKKYEADELYIRKPLRR) are cytoplasmic. The helical transmembrane segment at 164 to 184 (LTWIMTGIVYLTIYTGALVRH) threads the bilayer. Residues 185–215 (AKASLAYGGWPLPFHDIIPHTEQDWVQFAHR) lie on the Extracellular side of the membrane. His-214 is a binding site for heme b. A helical membrane pass occupies residues 216–236 (GMAFITFFWIMITFIHAVKNY). Topologically, residues 237–244 (SENRTIRY) are cytoplasmic. The helical transmembrane segment at 245–265 (GYTTAFILIILQVITGALSVM) threads the bilayer. Topologically, residues 266-270 (TNVNL) are extracellular. Residues 271 to 291 (FIALLHALFITILFGMIAYFI) traverse the membrane as a helical segment. His-276 contacts heme b. Residues 292–304 (MLMLRTIRSEKIK) lie on the Cytoplasmic side of the membrane.

Belongs to the COX15/CtaA family. Type 1 subfamily. Interacts with CtaB. Requires heme b as cofactor.

It localises to the cell membrane. It carries out the reaction Fe(II)-heme o + 2 A + H2O = Fe(II)-heme a + 2 AH2. It functions in the pathway porphyrin-containing compound metabolism; heme A biosynthesis; heme A from heme O: step 1/1. In terms of biological role, catalyzes the conversion of heme O to heme A by two successive hydroxylations of the methyl group at C8. The first hydroxylation forms heme I, the second hydroxylation results in an unstable dihydroxymethyl group, which spontaneously dehydrates, resulting in the formyl group of heme A. The protein is Heme A synthase of Staphylococcus haemolyticus (strain JCSC1435).